The following is a 407-amino-acid chain: Peptidase T (407 aa).

His-82 is a Zn(2+) binding site. Asp-84 is an active-site residue. Asp-143 is a binding site for Zn(2+). The Proton acceptor role is filled by Glu-177. The Zn(2+) site is built by Glu-178, Asp-200, and His-382.

It belongs to the peptidase M20B family. It depends on Zn(2+) as a cofactor.

The protein resides in the cytoplasm. The enzyme catalyses Release of the N-terminal residue from a tripeptide.. Cleaves the N-terminal amino acid of tripeptides. This Streptococcus pyogenes serotype M2 (strain MGAS10270) protein is Peptidase T.